The primary structure comprises 104 residues: MRFFSYLGLLLAGLVSLQGFSTDNPLEEELRYWCQYVKNCRFCWACQDGLCKNKVLKDMPSVQEHSYPMEHCMIHRQCKYIRDGPIFQAECTMQTCDATHLINA.

The N-terminal stretch at 1–31 (MRFFSYLGLLLAGLVSLQGFSTDNPLEEELR) is a signal peptide.

This sequence belongs to the asfivirus MGF 110 family.

Functionally, plays a role in virus cell tropism, and may be required for efficient virus replication in macrophages. The sequence is that of Protein MGF 110-2L from African swine fever virus (isolate Warthog/Namibia/Wart80/1980) (ASFV).